The chain runs to 192 residues: 3-isopropylmalate dehydratase small subunit (192 aa).

This sequence belongs to the LeuD family. LeuD type 1 subfamily. As to quaternary structure, heterodimer of LeuC and LeuD.

The enzyme catalyses (2R,3S)-3-isopropylmalate = (2S)-2-isopropylmalate. It participates in amino-acid biosynthesis; L-leucine biosynthesis; L-leucine from 3-methyl-2-oxobutanoate: step 2/4. Catalyzes the isomerization between 2-isopropylmalate and 3-isopropylmalate, via the formation of 2-isopropylmaleate. The polypeptide is 3-isopropylmalate dehydratase small subunit (Zymomonas mobilis subsp. mobilis (strain ATCC 31821 / ZM4 / CP4)).